Reading from the N-terminus, the 321-residue chain is MRIGQYQLRNRLIAAPMAGITDRPFRTLCYEMGAGLTVSEMMSSNPQVWESDKSRLRMVHIDEPGIRTVQIAGSDPKEMADAARINVESGAQIIDINMGCPAKKVNRKLAGSALLQYPDVVKSILTEVVNAVDVPVTLKIRTGWAPEHRNCEEIAQLAEDCGIQALTIHGRTRACLFNGEAEYDSIRAVKQKVSIPVIANGDITDPLKARAVLDYTGADALMIGRAAQGRPWIFREIQHYLDTGELLPPLPLAEVKRLLCAHVRELHDFYGPAKGYRIARKHVSWYLQEHAPNDQFRRTFNAIEDASEQLEALEAYFENFA.

FMN contacts are provided by residues 16–18 and Gln-70; that span reads PMA. Cys-100 serves as the catalytic Proton donor. Residues Lys-139, 200–202, and 224–225 contribute to the FMN site; these read NGD and GR.

It belongs to the Dus family. DusB subfamily. Requires FMN as cofactor.

It carries out the reaction a 5,6-dihydrouridine in tRNA + NAD(+) = a uridine in tRNA + NADH + H(+). The enzyme catalyses a 5,6-dihydrouridine in tRNA + NADP(+) = a uridine in tRNA + NADPH + H(+). Its function is as follows. Catalyzes the synthesis of 5,6-dihydrouridine (D), a modified base found in the D-loop of most tRNAs, via the reduction of the C5-C6 double bond in target uridines. The protein is tRNA-dihydrouridine synthase B of Escherichia coli O157:H7.